Consider the following 84-residue polypeptide: Small ribosomal subunit protein bS18 (84 aa).

This sequence belongs to the bacterial ribosomal protein bS18 family. As to quaternary structure, part of the 30S ribosomal subunit. Forms a tight heterodimer with protein bS6.

Its function is as follows. Binds as a heterodimer with protein bS6 to the central domain of the 16S rRNA, where it helps stabilize the platform of the 30S subunit. In Helicobacter hepaticus (strain ATCC 51449 / 3B1), this protein is Small ribosomal subunit protein bS18.